The sequence spans 409 residues: MTNSVKTNGPSSSDMEYYYKSLYPFKHIFNWLNHSPKPSRDMINREFAMAFRSGAYKRYNSFNSVQDFKAQIEKANPDRFEIGAIYNKPPRERDTLLKSELKALEKELVFDIDMDDYDAFRTCCSGAQVCSKCWKFISLAMKITNTALREDFGYKDFIWVFSGRRGAHCWVSDKRARALTDVQRRNVLDYVNVIRDRNTDKRLALKRPYHPHLARSLEQLKPFFVSIMLEEQNPWEDDQHAIQTLLPALYDKQLIDSLKKYWLDNPRRSSKEKWNDIDQIATSLFKGPKQDSHIIKLRECKEDLVLMTLYPKLDVEVTKQTIHLLKAPFCIHPATGNVCVPIDESFAPEKAPKLIDLQTEMEKNNDVSLTALQPFINQFQAYVSSLLKNELGSVKREREDDDEPASLDF.

Active-site residues include Glu46, Asp111, and Asp113. The Zinc knuckle motif motif lies at 123-133; sequence CCSGAQVCSKC.

It belongs to the eukaryotic-type primase small subunit family. As to quaternary structure, DNA polymerase alpha:primase is a four subunit enzyme complex, which is assembled throughout the cell cycle, and consists of the two DNA polymerase subunits A POL1 and B POL12, and the DNA primase large PRI2 and small PRI1 subunits.

Functionally, DNA primase is the polymerase that synthesizes small RNA primers for the Okazaki fragments made during discontinuous DNA replication. In a complex with DNA polymerase alpha (DNA polymerase alpha:primase) constitutes a replicative polymerase. Both primase components participate in formation of the active center, but the ATP-binding site is exclusively located on p48. The protein is DNA primase small subunit (PRI1) of Saccharomyces cerevisiae (strain ATCC 204508 / S288c) (Baker's yeast).